We begin with the raw amino-acid sequence, 316 residues long: Serpentine receptor class gamma-4 (316 aa).

A run of 7 helical transmembrane segments spans residues Phe21–Thr41, Ser50–Val70, Ile99–Asn121, Met140–Ile160, Phe188–Leu208, Thr229–Phe249, and Ile258–Met278.

The protein belongs to the nematode receptor-like protein srg family.

Its subcellular location is the membrane. This is Serpentine receptor class gamma-4 (srg-4) from Caenorhabditis elegans.